We begin with the raw amino-acid sequence, 106 residues long: MASMNVKKGDRVVVLAGKDKGKKGEVIAAMPSEQRVIVQGVNLVKRHTRPSATSQGGIVEKEASIHVSNVAHEDPKDGKATRIGHKILEDGRKVRVARRSGEVIDR.

This sequence belongs to the universal ribosomal protein uL24 family. Part of the 50S ribosomal subunit.

Functionally, one of two assembly initiator proteins, it binds directly to the 5'-end of the 23S rRNA, where it nucleates assembly of the 50S subunit. In terms of biological role, one of the proteins that surrounds the polypeptide exit tunnel on the outside of the subunit. This chain is Large ribosomal subunit protein uL24, found in Paramagnetospirillum magneticum (strain ATCC 700264 / AMB-1) (Magnetospirillum magneticum).